The following is a 353-amino-acid chain: Soluble interferon alpha/beta receptor OPG204 (353 aa).

Residues 1–21 (MTMKMMVHIYFVSLSLLLLLF) form the signal peptide. 2 Ig-like C2-type domains span residues 67–139 (LGEP…KNGD) and 157–239 (PKTY…IVVS). Disulfide bonds link Cys75–Cys131 and Cys174–Cys223. Asn119, Asn184, Asn263, Asn271, and Asn323 each carry an N-linked (GlcNAc...) asparagine; by host glycan. Positions 248–347 (PSQDHRFKLI…HNYYFEKTLT (100 aa)) constitute an Ig-like V-type domain. Cys274 and Cys335 form a disulfide bridge.

The protein belongs to the interleukin-1 receptor family. In terms of assembly, interacts with host IFNA1.

It is found in the secreted. Counteracts the antiviral effects of host IFN-alpha/beta and key IFN-inducible proteins involved in viral RNA degradation suxh as host OAS1. Acts as a soluble IFN-alpha receptor and thus inhibits the interaction between host IFN-alpha and its receptor. The chain is Soluble interferon alpha/beta receptor OPG204 (OPG204) from Homo sapiens (Human).